A 223-amino-acid chain; its full sequence is Pre-mRNA-splicing factor SPF27 (223 aa).

Residues 139–223 adopt a coiled-coil conformation; it reads NENLLHMIDC…GENKENIEDY (85 aa).

This sequence belongs to the SPF27 family. In terms of assembly, component of the pre-catalytic and catalytic spliceosome complexes. Component of the postcatalytic spliceosome P complex.

The protein resides in the nucleus. Its function is as follows. Required for pre-mRNA splicing as component of the activated spliceosome. May have a scaffolding role in the spliceosome assembly as it contacts all other components of the core complex. This is Pre-mRNA-splicing factor SPF27 (bcas2) from Xenopus tropicalis (Western clawed frog).